A 450-amino-acid chain; its full sequence is Probable glycine dehydrogenase (decarboxylating) subunit 1 (450 aa).

Belongs to the GcvP family. N-terminal subunit subfamily. The glycine cleavage system is composed of four proteins: P, T, L and H. In this organism, the P 'protein' is a heterodimer of two subunits.

It catalyses the reaction N(6)-[(R)-lipoyl]-L-lysyl-[glycine-cleavage complex H protein] + glycine + H(+) = N(6)-[(R)-S(8)-aminomethyldihydrolipoyl]-L-lysyl-[glycine-cleavage complex H protein] + CO2. The glycine cleavage system catalyzes the degradation of glycine. The P protein binds the alpha-amino group of glycine through its pyridoxal phosphate cofactor; CO(2) is released and the remaining methylamine moiety is then transferred to the lipoamide cofactor of the H protein. The protein is Probable glycine dehydrogenase (decarboxylating) subunit 1 of Brevibacillus brevis (strain 47 / JCM 6285 / NBRC 100599).